The following is a 60-amino-acid chain: AAAAGDSAASDLLGDNILRSEDPPMSIDLTFHMLRNMIHMAKMEGEREQAQINRNLLDEV.

Over residues 1–14 (AAAAGDSAASDLLG) the composition is skewed to low complexity. Residues 1-22 (AAAAGDSAASDLLGDNILRSED) form a disordered region. At Val60 the chain carries Valine amide.

This sequence belongs to the sauvagine/corticotropin-releasing factor/urotensin I family.

Its subcellular location is the secreted. Functionally, urotensin is found in the teleost caudal neurosecretory system. It has a suggested role in osmoregulation and as a corticotropin-releasing factor. The non-hormonal portion of this precursor may be a urotensin binding protein, urophysin. This is UI from Platichthys flesus (European flounder).